The chain runs to 238 residues: Orotidine 5'-phosphate decarboxylase (238 aa).

Residues D18, K40, 67–76, T122, R183, Q192, and R213 contribute to the substrate site; that span reads DMKLLDIDNT. The active-site Proton donor is the K69.

This sequence belongs to the OMP decarboxylase family. Type 1 subfamily. In terms of assembly, homodimer.

It catalyses the reaction orotidine 5'-phosphate + H(+) = UMP + CO2. The protein operates within pyrimidine metabolism; UMP biosynthesis via de novo pathway; UMP from orotate: step 2/2. In terms of biological role, catalyzes the decarboxylation of orotidine 5'-monophosphate (OMP) to uridine 5'-monophosphate (UMP). The polypeptide is Orotidine 5'-phosphate decarboxylase (Brucella abortus (strain S19)).